We begin with the raw amino-acid sequence, 361 residues long: Mannose-1-phosphate guanyltransferase (361 aa).

Thr-153 is modified (phosphothreonine). Residue Lys-244 forms a Glycyl lysine isopeptide (Lys-Gly) (interchain with G-Cter in ubiquitin) linkage.

This sequence belongs to the transferase hexapeptide repeat family.

It localises to the cytoplasm. It catalyses the reaction alpha-D-mannose 1-phosphate + GTP + H(+) = GDP-alpha-D-mannose + diphosphate. Its pathway is nucleotide-sugar biosynthesis; GDP-alpha-D-mannose biosynthesis; GDP-alpha-D-mannose from alpha-D-mannose 1-phosphate (GTP route): step 1/1. Its function is as follows. Involved in cell wall synthesis where it is required for glycosylation. Involved in cell cycle progression through cell-size checkpoint. In Saccharomyces cerevisiae (strain ATCC 204508 / S288c) (Baker's yeast), this protein is Mannose-1-phosphate guanyltransferase (PSA1).